We begin with the raw amino-acid sequence, 214 residues long: Adenylate kinase (214 aa).

Position 10–15 (10–15 (GAGKGT)) interacts with ATP. An NMP region spans residues 30 to 59 (STGDMLRAAVKAQSELGRQAKALMDAGKLV). AMP contacts are provided by residues Thr31, Arg36, 57 to 59 (KLV), 85 to 88 (GFPR), and Gln92. The segment at 122-159 (GRRVHAPSGRVYHVKFNPPKQEGKDDVTGELLTSRKDD) is LID. ATP-binding positions include Arg123 and 132–133 (VY). Residues Arg156 and Arg167 each coordinate AMP. Arg200 lines the ATP pocket.

The protein belongs to the adenylate kinase family. As to quaternary structure, monomer.

Its subcellular location is the cytoplasm. The catalysed reaction is AMP + ATP = 2 ADP. The protein operates within purine metabolism; AMP biosynthesis via salvage pathway; AMP from ADP: step 1/1. Functionally, catalyzes the reversible transfer of the terminal phosphate group between ATP and AMP. Plays an important role in cellular energy homeostasis and in adenine nucleotide metabolism. This Sodalis glossinidius (strain morsitans) protein is Adenylate kinase.